The chain runs to 306 residues: UDP-N-acetylenolpyruvoylglucosamine reductase (306 aa).

Positions 28–194 (KIGNISKLFL…LKTELNLKKE (167 aa)) constitute an FAD-binding PCMH-type domain. The active-site Proton donor is S223. E295 is a catalytic residue.

It belongs to the MurB family. It depends on FAD as a cofactor.

The protein resides in the cytoplasm. The catalysed reaction is UDP-N-acetyl-alpha-D-muramate + NADP(+) = UDP-N-acetyl-3-O-(1-carboxyvinyl)-alpha-D-glucosamine + NADPH + H(+). It functions in the pathway cell wall biogenesis; peptidoglycan biosynthesis. Its function is as follows. Cell wall formation. The sequence is that of UDP-N-acetylenolpyruvoylglucosamine reductase from Borrelia garinii subsp. bavariensis (strain ATCC BAA-2496 / DSM 23469 / PBi) (Borreliella bavariensis).